The sequence spans 491 residues: Cell division control protein 1 (491 aa).

Positions 1–33 (MVYRNRSKSVLSTHSKKSDDKAHYKSRSKKKSK) are disordered. Residues 1-39 (MVYRNRSKSVLSTHSKKSDDKAHYKSRSKKKSKSRSKKR) are Cytoplasmic-facing. Positions 24–33 (YKSRSKKKSK) are enriched in basic residues. The helical transmembrane segment at 40 to 60 (LRIYWRYISIVWILWLGLISY) threads the bilayer. Over 61–391 (YESVVVKRAM…LCYMPDPYKA (331 aa)) the chain is Extracellular. Residues Asp-95, Asp-144, Asn-183, and His-323 each coordinate a divalent metal cation. Residues 392–412 (IRMYLWGLLFSAAFIAYMHFF) traverse the membrane as a helical segment. Residues 413 to 465 (PKSFNNRVATIMNRVFTRPDGNTSDLPLPTSISKSKSKKSLTHSKYAVNDTRS) lie on the Cytoplasmic side of the membrane. Residues 466 to 486 (IKQFLVNAIVLFVSVMPIFIY) form a helical membrane-spanning segment. The Extracellular portion of the chain corresponds to 487–491 (FYTVV).

It belongs to the metallophosphoesterase superfamily. MPPE1 family. A divalent metal cation serves as cofactor.

It is found in the membrane. Its function is as follows. Probable metallophosphoesterase which may participate in recombinational repair of double -strand breaks. The chain is Cell division control protein 1 (CDC1) from Saccharomyces cerevisiae (strain ATCC 204508 / S288c) (Baker's yeast).